Consider the following 239-residue polypeptide: Tetraspanin-9 (239 aa).

Over 1–13 (MARGCLCCLKYMM) the chain is Cytoplasmic. The helical transmembrane segment at 14–34 (FLFNLIFWLCGCGLLGVGIWL) threads the bilayer. The Extracellular segment spans residues 35-55 (SVSQGNFATFSPSFPSLSAAN). Residues 56-76 (LVIAIGTIVMVTGFLGCLGAI) form a helical membrane-spanning segment. Residues 77-85 (KENRCLLLS) are Cytoplasmic-facing. The chain crosses the membrane as a helical span at residues 86–106 (FFIVLLIILLAELILIILFFV). Residues 107 to 203 (YMDKVNENAR…VKMWFDDNKH (97 aa)) are Extracellular-facing. N180 carries an N-linked (GlcNAc...) asparagine glycan. Residues 204–224 (VLGTVGMCILIMQILGMAFSM) form a helical membrane-spanning segment. Residues 225–239 (TLFQHIHRTGKKYDA) are Cytoplasmic-facing.

This sequence belongs to the tetraspanin (TM4SF) family. Found in a complex with GP6. In terms of processing, glycosylated.

It localises to the membrane. The chain is Tetraspanin-9 (TSPAN9) from Sus scrofa (Pig).